A 262-amino-acid chain; its full sequence is Ribosomal RNA small subunit methyltransferase A (262 aa).

6 residues coordinate S-adenosyl-L-methionine: histidine 16, leucine 18, glycine 43, glutamate 64, aspartate 89, and asparagine 109.

This sequence belongs to the class I-like SAM-binding methyltransferase superfamily. rRNA adenine N(6)-methyltransferase family. RsmA subfamily.

It localises to the cytoplasm. The enzyme catalyses adenosine(1518)/adenosine(1519) in 16S rRNA + 4 S-adenosyl-L-methionine = N(6)-dimethyladenosine(1518)/N(6)-dimethyladenosine(1519) in 16S rRNA + 4 S-adenosyl-L-homocysteine + 4 H(+). Its function is as follows. Specifically dimethylates two adjacent adenosines (A1518 and A1519) in the loop of a conserved hairpin near the 3'-end of 16S rRNA in the 30S particle. May play a critical role in biogenesis of 30S subunits. The polypeptide is Ribosomal RNA small subunit methyltransferase A (Xanthomonas campestris pv. campestris (strain B100)).